A 294-amino-acid chain; its full sequence is MHFKDLGLHDYTLKNLMYENNCCKFYDAVDENNISYVLKFVPSDVTSEGDTFPFVDRFQVKEGVFLVYSSNDFGKEGTDYFTYTGSGGNEVHISGTSSEAGIKPQFIETCHPKHLKRGTKEQEDINSSTSKKSAVINNFSGEKTPNPRPQSSNISERETYVGILNVKCKNKNSSKIRSEKLVSSVIETKHTPGLASILSKEGTTYPNNADGKHISIVNPSSKIYHSSHKQIVKTPIPKSGLSPIERCPFNGQNIKCYSPRPLDHESPQRDFNNNFQLRILKSSVLQRRQSTQNS.

The interval 115–153 (LKRGTKEQEDINSSTSKKSAVINNFSGEKTPNPRPQSSN) is disordered. Residues 125-153 (INSSTSKKSAVINNFSGEKTPNPRPQSSN) are compositionally biased toward polar residues. Ser266 carries the phosphoserine modification.

The protein resides in the cytoplasm. Involved in salt tolerance. This Saccharomyces cerevisiae (strain ATCC 204508 / S288c) (Baker's yeast) protein is Halotolerance protein HAL1 (HAL1).